A 141-amino-acid polypeptide reads, in one-letter code: MSKALIKFIRLSPTKARLIAREVRGMNAELAMASLKFMPNKGAKYIANAISSAVANGGFEANEVIVKSCRVDAAAVLKRFRPRARGSASRIRKPTSHILVEVAKAEVKAEEKKTVAKKTTTTKAPAKKTTSTKKATVKKES.

The segment at 110 to 141 is disordered; that stretch reads EEKKTVAKKTTTTKAPAKKTTSTKKATVKKES. Over residues 117–134 the composition is skewed to low complexity; that stretch reads KKTTTTKAPAKKTTSTKK.

The protein belongs to the universal ribosomal protein uL22 family. Part of the 50S ribosomal subunit.

Its function is as follows. This protein binds specifically to 23S rRNA; its binding is stimulated by other ribosomal proteins, e.g. L4, L17, and L20. It is important during the early stages of 50S assembly. It makes multiple contacts with different domains of the 23S rRNA in the assembled 50S subunit and ribosome. Functionally, the globular domain of the protein is located near the polypeptide exit tunnel on the outside of the subunit, while an extended beta-hairpin is found that lines the wall of the exit tunnel in the center of the 70S ribosome. The chain is Large ribosomal subunit protein uL22 from Campylobacter jejuni (strain RM1221).